Consider the following 181-residue polypeptide: Acireductone dioxygenase (181 aa).

Fe(2+) contacts are provided by His-97, His-99, Glu-103, and His-141. The Ni(2+) site is built by His-97, His-99, Glu-103, and His-141.

The protein belongs to the acireductone dioxygenase (ARD) family. Monomer. Fe(2+) is required as a cofactor. It depends on Ni(2+) as a cofactor.

It carries out the reaction 1,2-dihydroxy-5-(methylsulfanyl)pent-1-en-3-one + O2 = 3-(methylsulfanyl)propanoate + CO + formate + 2 H(+). It catalyses the reaction 1,2-dihydroxy-5-(methylsulfanyl)pent-1-en-3-one + O2 = 4-methylsulfanyl-2-oxobutanoate + formate + 2 H(+). The protein operates within amino-acid biosynthesis; L-methionine biosynthesis via salvage pathway; L-methionine from S-methyl-5-thio-alpha-D-ribose 1-phosphate: step 5/6. Functionally, catalyzes 2 different reactions between oxygen and the acireductone 1,2-dihydroxy-3-keto-5-methylthiopentene (DHK-MTPene) depending upon the metal bound in the active site. Fe-containing acireductone dioxygenase (Fe-ARD) produces formate and 2-keto-4-methylthiobutyrate (KMTB), the alpha-ketoacid precursor of methionine in the methionine recycle pathway. Ni-containing acireductone dioxygenase (Ni-ARD) produces methylthiopropionate, carbon monoxide and formate, and does not lie on the methionine recycle pathway. The polypeptide is Acireductone dioxygenase (Pseudomonas syringae pv. syringae (strain B728a)).